The primary structure comprises 262 residues: Type III pantothenate kinase (262 aa).

6–13 (DAGNTNMV) is a binding site for ATP. Substrate-binding positions include Y100 and 107–110 (GADR). D109 acts as the Proton acceptor in catalysis. D129 provides a ligand contact to K(+). T132 serves as a coordination point for ATP. A substrate-binding site is contributed by T184.

Belongs to the type III pantothenate kinase family. Homodimer. Requires NH4(+) as cofactor. It depends on K(+) as a cofactor.

It localises to the cytoplasm. It carries out the reaction (R)-pantothenate + ATP = (R)-4'-phosphopantothenate + ADP + H(+). The protein operates within cofactor biosynthesis; coenzyme A biosynthesis; CoA from (R)-pantothenate: step 1/5. In terms of biological role, catalyzes the phosphorylation of pantothenate (Pan), the first step in CoA biosynthesis. This chain is Type III pantothenate kinase, found in Clostridium tetani (strain Massachusetts / E88).